The following is a 319-amino-acid chain: Tetrahydromethanopterin S-methyltransferase subunit H (319 aa).

It belongs to the MtrH family. The complex is composed of 8 subunits; MtrA, MtrB, MtrC, MtrD, MtrE, MtrF, MtrG and MtrH.

The enzyme catalyses 5-methyl-5,6,7,8-tetrahydromethanopterin + coenzyme M + 2 Na(+)(in) = 5,6,7,8-tetrahydromethanopterin + methyl-coenzyme M + 2 Na(+)(out). Its pathway is one-carbon metabolism; methanogenesis from CO(2); methyl-coenzyme M from 5,10-methylene-5,6,7,8-tetrahydromethanopterin: step 2/2. Part of a complex that catalyzes the formation of methyl-coenzyme M and tetrahydromethanopterin from coenzyme M and methyl-tetrahydromethanopterin. This is an energy-conserving, sodium-ion translocating step. MtrH catalyzes the transfer of the methyl group from methyl-tetrahydromethanopterin to the corrinoid prosthetic group of MtrA. The polypeptide is Tetrahydromethanopterin S-methyltransferase subunit H (Methanocaldococcus jannaschii (strain ATCC 43067 / DSM 2661 / JAL-1 / JCM 10045 / NBRC 100440) (Methanococcus jannaschii)).